The following is a 170-amino-acid chain: NADPH-dependent 7-cyano-7-deazaguanine reductase (170 aa).

The active-site Thioimide intermediate is the cysteine 58. Catalysis depends on aspartate 65, which acts as the Proton donor. Residues 80 to 82 (VES) and 99 to 100 (HE) each bind substrate.

It belongs to the GTP cyclohydrolase I family. QueF type 1 subfamily.

It localises to the cytoplasm. It carries out the reaction 7-aminomethyl-7-carbaguanine + 2 NADP(+) = 7-cyano-7-deazaguanine + 2 NADPH + 3 H(+). It functions in the pathway tRNA modification; tRNA-queuosine biosynthesis. In terms of biological role, catalyzes the NADPH-dependent reduction of 7-cyano-7-deazaguanine (preQ0) to 7-aminomethyl-7-deazaguanine (preQ1). The polypeptide is NADPH-dependent 7-cyano-7-deazaguanine reductase (Bdellovibrio bacteriovorus (strain ATCC 15356 / DSM 50701 / NCIMB 9529 / HD100)).